The primary structure comprises 923 residues: Immunomodulating metalloprotease (923 aa).

A signal peptide spans 1–41 (MSLSTTAFPSLQGENMSRSPIPRHRALLAGFCLAGALSAQA). Residues 450-794 (QGFTAIGRMA…FYTQWVHYWA (345 aa)) enclose the Peptidase M60 domain. His696 serves as a coordination point for Zn(2+). Residue Glu697 is part of the active site. His700 lines the Zn(2+) pocket.

The protein belongs to the peptidase M88 family. The cofactor is Zn(2+).

The protein localises to the secreted. Proteolytic activity is blocked in the presence of EDTA. Its function is as follows. Protease that degrades several proteins of the host immune system. Cleaves P-selectin glycoprotein ligand-1 (PSGL-1), leading to its functional inhibition; PSGL-1 is a leukocyte cell-surface receptor essential for leukocyte recruitment to the site of infection. Next to PSGL-1, targets host CD43 and CD44 that are also involved in leukocyte homing. Thus, prevents neutrophil extravasation and thereby protects P.aeruginosa from neutrophil attack. Is also able to inhibit the decay accelerating factor (CD55), but not the cell-surface receptors CD46 and CD31. This Pseudomonas aeruginosa (strain ATCC 15692 / DSM 22644 / CIP 104116 / JCM 14847 / LMG 12228 / 1C / PRS 101 / PAO1) protein is Immunomodulating metalloprotease.